Reading from the N-terminus, the 556-residue chain is Man(5)GlcNAc(2)-PP-dolichol translocation protein RFT1 (556 aa).

The next 12 membrane-spanning stretches (helical) occupy residues 10 to 30, 41 to 61, 91 to 111, 129 to 149, 156 to 176, 184 to 204, 353 to 373, 389 to 409, 440 to 460, 461 to 477, 489 to 509, and 517 to 537; these read LLGA…TFGI, EVLG…LFLS, LTVP…LNWL, VAFS…AQVF, ILLN…IVTG, AFAI…YGFF, SVLN…FTFG, FVAG…IYLL, VSFL…GFIF, ANCI…TYYI, LLGL…GIVC, and LATH…SWAL.

This sequence belongs to the RFT1 family.

It is found in the endoplasmic reticulum membrane. It functions in the pathway protein modification; protein glycosylation. Functionally, intramembrane glycolipid transporter that operates in the biosynthetic pathway of dolichol-linked oligosaccharides, the glycan precursors employed in protein asparagine (N)-glycosylation. The sequential addition of sugars to dolichol pyrophosphate produces dolichol-linked oligosaccharides containing fourteen sugars, including two GlcNAcs, nine mannoses and three glucoses. Once assembled, the oligosaccharide is transferred from the lipid to nascent proteins by oligosaccharyltransferases. The assembly of dolichol-linked oligosaccharides begins on the cytosolic side of the endoplasmic reticulum membrane and finishes in its lumen. RFT1 could mediate the translocation of the cytosolically oriented intermediate DolPP-GlcNAc2Man5, produced by ALG11, into the ER lumen where dolichol-linked oligosaccharides assembly continues. However, the intramembrane lipid transporter activity could not be confirmed in vitro. The polypeptide is Man(5)GlcNAc(2)-PP-dolichol translocation protein RFT1 (Drosophila melanogaster (Fruit fly)).